A 180-amino-acid polypeptide reads, in one-letter code: Glycodelin (180 aa).

Residues M1 to A18 form the signal peptide. N-linked (GlcNAc...) (complex) asparagine glycosylation is found at N46 and N81. 2 disulfide bridges follow: C84-C178 and C124-C137.

It belongs to the calycin superfamily. Lipocalin family. Homodimer. In terms of processing, four distinct glycoforms A, C, F and S arise from different N-linked oligosaccharide chains at amino acid residues Asn-46 and Asn-81. Glycodelin-A and -F are taken up by the cumulus cells in which partial deglycosylation takes place to produce glycodelin-C. As to expression, this protein is, the main protein synthesized and secreted in the endometrium from mid-luteal phase of the menstrual cycle and during the first semester of pregnancy. Glycodelin-A is expressed in amniotic fluid, endometrium/decidua and maternal serum (at protein level). Glycodelin-F is expressed in follicular fluid, luteinized granulosa cells and the oviduct (at protein level). Glycodelin-S is expressed in seminal plasma and seminal vesicles (at protein level). Glycodelin-C is detected in cumulus cells (at protein level), but cumulus cells do not synthesize Glycodelin-C but take up and convert glycodelin-A and -F vis glycan remodeling.

It is found in the secreted. Its function is as follows. Glycoprotein that regulates critical steps during fertilization and also has immunomonomodulatory effects. Four glycoforms, namely glycodelin-S, -A, -F and -C have been identified in reproductive tissues that differ in glycosylation and biological activity. Glycodelin-A has contraceptive and immunosuppressive activities. Glycodelin-C stimulates binding of spermatozoa to the zona pellucida. Glycodelin-F inhibits spermatozoa-zona pellucida binding and significantly suppresses progesterone-induced acrosome reaction of spermatozoa. Glycodelin-S in seminal plasma maintains the uncapacitated state of human spermatozoa. The polypeptide is Glycodelin (PAEP) (Homo sapiens (Human)).